Here is a 280-residue protein sequence, read N- to C-terminus: Ribosomal RNA small subunit methyltransferase A (280 aa).

Residues His15, Leu17, Gly42, Glu64, Asp89, and Asn109 each contribute to the S-adenosyl-L-methionine site.

The protein belongs to the class I-like SAM-binding methyltransferase superfamily. rRNA adenine N(6)-methyltransferase family. RsmA subfamily.

It localises to the cytoplasm. It catalyses the reaction adenosine(1518)/adenosine(1519) in 16S rRNA + 4 S-adenosyl-L-methionine = N(6)-dimethyladenosine(1518)/N(6)-dimethyladenosine(1519) in 16S rRNA + 4 S-adenosyl-L-homocysteine + 4 H(+). Specifically dimethylates two adjacent adenosines (A1518 and A1519) in the loop of a conserved hairpin near the 3'-end of 16S rRNA in the 30S particle. May play a critical role in biogenesis of 30S subunits. This Prochlorococcus marinus (strain MIT 9313) protein is Ribosomal RNA small subunit methyltransferase A.